The sequence spans 590 residues: Aspartate--tRNA ligase (590 aa).

Glutamate 174 provides a ligand contact to L-aspartate. The aspartate stretch occupies residues 198-201 (QLMK). Arginine 220 contributes to the L-aspartate binding site. Residues 220–222 (RDE) and glutamine 229 contribute to the ATP site. Residue histidine 443 participates in L-aspartate binding. Glutamate 484 lines the ATP pocket. Arginine 491 serves as a coordination point for L-aspartate. 536–539 (GLDR) is a binding site for ATP.

Belongs to the class-II aminoacyl-tRNA synthetase family. Type 1 subfamily. As to quaternary structure, homodimer.

It is found in the cytoplasm. It catalyses the reaction tRNA(Asp) + L-aspartate + ATP = L-aspartyl-tRNA(Asp) + AMP + diphosphate. Catalyzes the attachment of L-aspartate to tRNA(Asp) in a two-step reaction: L-aspartate is first activated by ATP to form Asp-AMP and then transferred to the acceptor end of tRNA(Asp). This Lactococcus lactis subsp. lactis (strain IL1403) (Streptococcus lactis) protein is Aspartate--tRNA ligase.